The following is a 231-amino-acid chain: PX domain-containing protein 1 (231 aa).

Residues 1-134 form the PX domain; that stretch reads MASAVFEGTS…TFFERSPLDQ (134 aa).

This is PX domain-containing protein 1 (PXDC1) from Bos taurus (Bovine).